The following is a 475-amino-acid chain: Membrane-bound lytic murein transglycosylase F (475 aa).

Positions 1-15 (MKKLLLILCCITLLA) are cleaved as a signal peptide. The non-LT domain stretch occupies residues 16 to 258 (ACQKVVVEQE…HLNEKYFAHV (243 aa)). The interval 259-475 (KRFDYVDTRA…KTEAAQPQQP (217 aa)) is LT domain. The active site involves Glu-303.

In the N-terminal section; belongs to the bacterial solute-binding protein 3 family. The protein in the C-terminal section; belongs to the transglycosylase Slt family.

Its subcellular location is the cell outer membrane. It catalyses the reaction Exolytic cleavage of the (1-&gt;4)-beta-glycosidic linkage between N-acetylmuramic acid (MurNAc) and N-acetylglucosamine (GlcNAc) residues in peptidoglycan, from either the reducing or the non-reducing ends of the peptidoglycan chains, with concomitant formation of a 1,6-anhydrobond in the MurNAc residue.. Functionally, murein-degrading enzyme that degrades murein glycan strands and insoluble, high-molecular weight murein sacculi, with the concomitant formation of a 1,6-anhydromuramoyl product. Lytic transglycosylases (LTs) play an integral role in the metabolism of the peptidoglycan (PG) sacculus. Their lytic action creates space within the PG sacculus to allow for its expansion as well as for the insertion of various structures such as secretion systems and flagella. The chain is Membrane-bound lytic murein transglycosylase F from Shewanella halifaxensis (strain HAW-EB4).